We begin with the raw amino-acid sequence, 217 residues long: Homeobox protein Hox-B7 (217 aa).

Positions I126 to R131 match the Antp-type hexapeptide motif. A DNA-binding region (homeobox) is located at residues R137–N196. Residues W192–E217 form a disordered region.

This sequence belongs to the Antp homeobox family. In terms of assembly, forms a DNA-binding heterodimer with transcription factor PBX1.

It localises to the nucleus. Functionally, sequence-specific transcription factor which is part of a developmental regulatory system that provides cells with specific positional identities on the anterior-posterior axis. The polypeptide is Homeobox protein Hox-B7 (Hoxb7) (Mus musculus (Mouse)).